A 200-amino-acid polypeptide reads, in one-letter code: Coiled-coil domain-containing protein 28B (200 aa).

Met-1 is subject to N-acetylmethionine. A compositionally biased stretch (basic residues) spans 1 to 10; that stretch reads MEDKKKKRSP. The tract at residues 1–49 is disordered; the sequence is MEDKKKKRSPKPCLTQPAQAPGTLRRVPVPTSHSGSLALGLPHLPSPKQ. Ser-46 and Ser-115 each carry phosphoserine. The segment covering 140–152 has biased composition (acidic residues); that stretch reads GEEEDEEEEEDGV. A disordered region spans residues 140–165; that stretch reads GEEEDEEEEEDGVTEGLPEEQKKTMA. A coiled-coil region spans residues 158-189; that stretch reads EEQKKTMADRNLDQLLSNLEDLSNSIQKLHLA.

In terms of assembly, interacts with BBS1, BBS2, BBS4, BBS5, BBS6, BBS7 and TTC8/BBS8. Interacts with MAPKAP1/SIN1 isoform 1 and RICTOR. As to expression, expressed in the retina, pericardium and limb epithelium.

The protein resides in the cytoplasm. Its subcellular location is the cytoskeleton. It localises to the microtubule organizing center. The protein localises to the centrosome. Its function is as follows. Involved in ciliogenesis. Regulates cilia length through its interaction with MAPKAP1/SIN1 but independently of mTORC2 complex. Modulates mTORC2 complex assembly and function, possibly enhances AKT1 phosphorylation. Does not seem to modulate assembly and function of mTORC1 complex. In Mus musculus (Mouse), this protein is Coiled-coil domain-containing protein 28B (Ccdc28b).